We begin with the raw amino-acid sequence, 103 residues long: Eukaryotic translation initiation factor 4E-1A-binding protein homolog (103 aa).

The segment at 49–103 (NSPLSKTPPPQLAHITNTELNKKVEKSTTTPTTTTPPTTTAKPKPTNDDDIFPME) is disordered. The segment covering 76 to 92 (TTTPTTTTPPTTTAKPK) has biased composition (low complexity).

This sequence belongs to the eIF4E-binding protein family.

Regulates assembly of the eIF4F complex. This chain is Eukaryotic translation initiation factor 4E-1A-binding protein homolog (febA), found in Dictyostelium discoideum (Social amoeba).